A 117-amino-acid chain; its full sequence is Large ribosomal subunit protein eL34 (117 aa).

Belongs to the eukaryotic ribosomal protein eL34 family. Component of the large ribosomal subunit.

It localises to the cytoplasm. It is found in the cytosol. The protein resides in the endoplasmic reticulum. In terms of biological role, component of the large ribosomal subunit. The ribosome is a large ribonucleoprotein complex responsible for the synthesis of proteins in the cell. The chain is Large ribosomal subunit protein eL34 (rpl34) from Ictalurus punctatus (Channel catfish).